The sequence spans 193 residues: dCTP deaminase (193 aa).

DCTP is bound by residues 110-115 (RSSLAR), aspartate 128, 136-138 (VLE), tyrosine 171, lysine 178, and glutamine 182. Glutamate 138 functions as the Proton donor/acceptor in the catalytic mechanism. The interval 169 to 193 (RPYNSRQDAKYRDQQGAVASRIDKD) is disordered.

The protein belongs to the dCTP deaminase family. As to quaternary structure, homotrimer.

The catalysed reaction is dCTP + H2O + H(+) = dUTP + NH4(+). Its pathway is pyrimidine metabolism; dUMP biosynthesis; dUMP from dCTP (dUTP route): step 1/2. In terms of biological role, catalyzes the deamination of dCTP to dUTP. The protein is dCTP deaminase of Serratia proteamaculans (strain 568).